Consider the following 412-residue polypeptide: Multifunctional CCA protein (412 aa).

Gly8 and Arg11 together coordinate ATP. The CTP site is built by Gly8 and Arg11. Mg(2+) contacts are provided by Asp21 and Asp23. Residues Arg91, Arg137, and Arg140 each contribute to the ATP site. 3 residues coordinate CTP: Arg91, Arg137, and Arg140. The 102-residue stretch at 228 to 329 (TGIHTLMTLS…VKLFDSIDAW (102 aa)) folds into the HD domain.

The protein belongs to the tRNA nucleotidyltransferase/poly(A) polymerase family. Bacterial CCA-adding enzyme type 1 subfamily. Monomer. Can also form homodimers and oligomers. The cofactor is Mg(2+). Requires Ni(2+) as cofactor.

It carries out the reaction a tRNA precursor + 2 CTP + ATP = a tRNA with a 3' CCA end + 3 diphosphate. It catalyses the reaction a tRNA with a 3' CCA end + 2 CTP + ATP = a tRNA with a 3' CCACCA end + 3 diphosphate. In terms of biological role, catalyzes the addition and repair of the essential 3'-terminal CCA sequence in tRNAs without using a nucleic acid template. Adds these three nucleotides in the order of C, C, and A to the tRNA nucleotide-73, using CTP and ATP as substrates and producing inorganic pyrophosphate. tRNA 3'-terminal CCA addition is required both for tRNA processing and repair. Also involved in tRNA surveillance by mediating tandem CCA addition to generate a CCACCA at the 3' terminus of unstable tRNAs. While stable tRNAs receive only 3'-terminal CCA, unstable tRNAs are marked with CCACCA and rapidly degraded. The protein is Multifunctional CCA protein of Escherichia coli (strain SMS-3-5 / SECEC).